The following is a 256-amino-acid chain: Stanniocalcin (256 aa).

A signal peptide spans 1–18; the sequence is MLAKFGLCAVFLVLGTAA. A propeptide spanning residues 19–33 is cleaved from the precursor; that stretch reads TFDTDPEEASPRRAR. Residue N62 is glycosylated (N-linked (GlcNAc...) asparagine).

This sequence belongs to the stanniocalcin family. Homodimer; disulfide-linked. As to expression, produced and secreted by the corpuscles of Stannius.

It localises to the secreted. Its function is as follows. Its primary function is the prevention of hypercalcemia. Upon release into the circulation, it lowers calcium transport by the gills, thereby reducing its rate of influx from the environment into the extracellular compartment. STC also stimulates phosphate reabsorption by renal proximal tubules. The consequence of this action is increased levels of plasma phosphate, which combines with excess calcium and promotes its disposal into bone and scales. This chain is Stanniocalcin (stc), found in Oncorhynchus kisutch (Coho salmon).